The sequence spans 239 residues: MARGCLCCLKYAMFLFNLIFWLCGCGLLGVGIWLSVSQGNFATFSPSFPSLSAANLVIAIGTIVMVTGFLGCLGAIKENRCLLLSFFIVLLIILLAELILIILFFVYMDKVNENAKKDLKEGLLLYNSENNVGLKNAWNIIQAEMHCCGVTDYRDWFLVLGENTVPDRCCMENSQGCGQNNTTLLWRTGCYEKVKQWFADNKHVLGTVGMCLLITQILGMAFSMTLFQHIHRTGKKYDA.

Transmembrane regions (helical) follow at residues 14–34 (FLFN…GIWL), 56–76 (LVIA…LGAI), and 86–106 (FFIV…LFFV). Residues Asn-180 and Asn-181 are each glycosylated (N-linked (GlcNAc...) asparagine). A helical membrane pass occupies residues 204-224 (VLGTVGMCLLITQILGMAFSM).

The protein belongs to the tetraspanin (TM4SF) family. Found in a complex with GP6. Glycosylated.

It is found in the membrane. The sequence is that of Tetraspanin-9 (TSPAN9) from Ovis aries (Sheep).